The primary structure comprises 380 residues: Cytochrome b (380 aa).

4 helical membrane-spanning segments follow: residues 33 to 53, 77 to 98, 113 to 133, and 178 to 198; these read FGSLLGLCLVTQILTGLFLAM, WLIRNIHANGASFFFICLYLHV, WNIGVILLLLTMMTAFVGYVL, and FFAFHFLLPFVIAGASMIHLL. 2 residues coordinate heme b: His83 and His97. The heme b site is built by His182 and His196. Position 201 (His201) interacts with a ubiquinone. Helical transmembrane passes span 226 to 246, 288 to 308, 320 to 340, and 347 to 367; these read YKDLLGFILMLVGLTSVALFS, LGGVLALLFSILVLMLVPMLH, LSQILFWALVADMLVLTWIGG, and FVLIGQAASTVYFALFLIALP.

It belongs to the cytochrome b family. As to quaternary structure, the cytochrome bc1 complex contains 3 respiratory subunits (MT-CYB, CYC1 and UQCRFS1), 2 core proteins (UQCRC1 and UQCRC2) and probably 6 low-molecular weight proteins. Requires heme b as cofactor.

It is found in the mitochondrion inner membrane. Functionally, component of the ubiquinol-cytochrome c reductase complex (complex III or cytochrome b-c1 complex) that is part of the mitochondrial respiratory chain. The b-c1 complex mediates electron transfer from ubiquinol to cytochrome c. Contributes to the generation of a proton gradient across the mitochondrial membrane that is then used for ATP synthesis. The chain is Cytochrome b (mt-cyb) from Acipenser persicus (Persian sturgeon).